The following is a 255-amino-acid chain: MSKNEINTNINIKDLNLWYGEKHALKDISLDIPEKSVTALIGPSGCGKSTFLRCLNRMNDLVKSCSIEGEVLVDGENIYDKDVDVVDLRKNVGMVFQKPNPFPMSIYDNIAYGPKIHGCSKSETEERVHKALDDAALMGEVQDRLGDQAFSLSGGQQQRLCIARTLAVKPEILLFDEPCSALDPISTSKIEDLILELKKDYTIVIVTHNMQQAARISDHTAFFLHGEIIEFGKTKHIFEDPQMKSTEDYITGRFG.

The ABC transporter domain maps to 10–250; the sequence is INIKDLNLWY…PQMKSTEDYI (241 aa). An ATP-binding site is contributed by 42 to 49; the sequence is GPSGCGKS.

It belongs to the ABC transporter superfamily. Phosphate importer (TC 3.A.1.7) family. The complex is composed of two ATP-binding proteins (PstB), two transmembrane proteins (PstC and PstA) and a solute-binding protein (PstS).

The protein resides in the cell membrane. The catalysed reaction is phosphate(out) + ATP + H2O = ADP + 2 phosphate(in) + H(+). Its function is as follows. Part of the ABC transporter complex PstSACB involved in phosphate import. Responsible for energy coupling to the transport system. The polypeptide is Phosphate import ATP-binding protein PstB (Methanococcoides burtonii (strain DSM 6242 / NBRC 107633 / OCM 468 / ACE-M)).